The primary structure comprises 139 residues: Large-conductance mechanosensitive channel (139 aa).

2 helical membrane passes run 17–37 (VVDM…VTSL) and 88–108 (TVDF…IMAA).

The protein belongs to the MscL family. Homopentamer.

The protein localises to the cell inner membrane. Functionally, channel that opens in response to stretch forces in the membrane lipid bilayer. May participate in the regulation of osmotic pressure changes within the cell. This is Large-conductance mechanosensitive channel from Porphyromonas gingivalis (strain ATCC 33277 / DSM 20709 / CIP 103683 / JCM 12257 / NCTC 11834 / 2561).